Consider the following 515-residue polypeptide: GMP synthase [glutamine-hydrolyzing] (515 aa).

The 191-residue stretch at 10-200 (TIIVLDFGSQ…VFGVCGCSEG (191 aa)) folds into the Glutamine amidotransferase type-1 domain. The active-site Nucleophile is the Cys87. Active-site residues include His174 and Glu176. In terms of domain architecture, GMPS ATP-PPase spans 201–390 (WNMENFIEVE…LGIPDEIVWR (190 aa)). 228–234 (SGGVDSS) contributes to the ATP binding site.

In terms of assembly, homodimer.

It carries out the reaction XMP + L-glutamine + ATP + H2O = GMP + L-glutamate + AMP + diphosphate + 2 H(+). Its pathway is purine metabolism; GMP biosynthesis; GMP from XMP (L-Gln route): step 1/1. Functionally, catalyzes the synthesis of GMP from XMP. The chain is GMP synthase [glutamine-hydrolyzing] from Bacillus thuringiensis subsp. konkukian (strain 97-27).